Reading from the N-terminus, the 93-residue chain is Small ribosomal subunit protein uS19 (93 aa).

Belongs to the universal ribosomal protein uS19 family.

Protein S19 forms a complex with S13 that binds strongly to the 16S ribosomal RNA. This Mycobacterium sp. (strain JLS) protein is Small ribosomal subunit protein uS19.